A 433-amino-acid polypeptide reads, in one-letter code: Trigger factor (433 aa).

In terms of domain architecture, PPIase FKBP-type spans 163-248; sequence GDFVTFDFKG…IKEIKVKELP (86 aa).

Belongs to the FKBP-type PPIase family. Tig subfamily.

The protein localises to the cytoplasm. It catalyses the reaction [protein]-peptidylproline (omega=180) = [protein]-peptidylproline (omega=0). Its function is as follows. Involved in protein export. Acts as a chaperone by maintaining the newly synthesized protein in an open conformation. Functions as a peptidyl-prolyl cis-trans isomerase. The protein is Trigger factor of Geotalea uraniireducens (strain Rf4) (Geobacter uraniireducens).